A 95-amino-acid chain; its full sequence is UPF0358 protein BCG9842_B1188 (95 aa).

Belongs to the UPF0358 family.

The protein is UPF0358 protein BCG9842_B1188 of Bacillus cereus (strain G9842).